The chain runs to 358 residues: MENKATLARNIGEKRVSPRSKVNGTGKSWRISYSPQRMDGVSSGRNVSKIPSPVRERLFLKNQERKPLGVSPLSNLSPNSLGRNSLEKSTYNNKLSLKDFEVGRKLGKGKFGKVYCVRHKKSGFICALKAIEKNEILQFNLLKQLKREVDIQLGMDHPNIIKLYAHFHDEKRVYLLMEHSINGELYKSLKNNGPFNDVLASHYIYQIADALHYMHKKRIIHRDVKPENVLIGFDNVVKLADFGWSILNPEGSKRKTLCGTIDYLSPEMITPREYDEQVDVWALGVLAYELVVGVPPFEENSKELTYKRILKCDLNFPESISKDAKDLISKLLVTDTTQRLSLTGVKTHPWILKNKPFW.

The interval 1 to 49 is disordered; that stretch reads MENKATLARNIGEKRVSPRSKVNGTGKSWRISYSPQRMDGVSSGRNVSK. The segment covering 20–35 has biased composition (polar residues); sequence SKVNGTGKSWRISYSP. The Protein kinase domain occupies 100–358; it reads FEVGRKLGKG…PWILKNKPFW (259 aa). Residues 106–114 and K129 each bind ATP; that span reads LGKGKFGKV. D223 (proton acceptor) is an active-site residue.

It belongs to the protein kinase superfamily. Ser/Thr protein kinase family. Aurora subfamily.

Its subcellular location is the nucleus. The protein localises to the cytoplasm. The protein resides in the cytoskeleton. It localises to the spindle. It is found in the chromosome. Its subcellular location is the centromere. The protein localises to the kinetochore. It carries out the reaction L-seryl-[protein] + ATP = O-phospho-L-seryl-[protein] + ADP + H(+). The enzyme catalyses L-threonyl-[protein] + ATP = O-phospho-L-threonyl-[protein] + ADP + H(+). Its function is as follows. Component of the chromosomal passenger complex (CPC), a complex that acts as a key regulator of chromosome segregation and cytokinesis. Has a role in error-correction of aberrent kinetochore-microtubule attachments to ensure that sister kinetochores become bioriented and connect to opposite poles by promoting spindle assembly checkpoint signaling. This Candida glabrata (strain ATCC 2001 / BCRC 20586 / JCM 3761 / NBRC 0622 / NRRL Y-65 / CBS 138) (Yeast) protein is Aurora kinase (IPL1).